The chain runs to 418 residues: F-box/LRR-repeat protein 14 (418 aa).

Residues 2 to 48 form the F-box domain; sequence ETHISCLFPELLAMIFGYLDVRDKGRAAQVCTAWRDAAYHKSVWRGV. A required for down-regulation of SNAI1 region spans residues 2–48; it reads ETHISCLFPELLAMIFGYLDVRDKGRAAQVCTAWRDAAYHKSVWRGV. LRR repeat units follow at residues 144-163, 170-191, 203-225, 229-250, and 254-275; these read GLEV…GLLL, RLKS…GHLA, GLEQ…HISR, GLRL…LHLS, and SLRS…MHLA.

As to quaternary structure, part of a SCF (SKP1-cullin-F-box) ubiquitin-protein ligase complex. Interacts with SKP1 and CUL1. Interacts with SNAI1; the interaction requires the phosphorylation of the two serine residues in the substrate destruction motif D-S-G-X(2,3,4)-S.

The protein resides in the cytoplasm. Substrate-recognition component of some SCF (SKP1-CUL1-F-box protein)-type E3 ubiquitin-protein ligase complexes. The SCF(FBXL14) complex acts by mediating ubiquitination and subsequent degradation of SNAI1. The polypeptide is F-box/LRR-repeat protein 14 (FBXL14) (Homo sapiens (Human)).